The sequence spans 63 residues: Translational regulator CsrA (63 aa).

Belongs to the CsrA/RsmA family. In terms of assembly, homodimer; the beta-strands of each monomer intercalate to form a hydrophobic core, while the alpha-helices form wings that extend away from the core.

It is found in the cytoplasm. Its function is as follows. A key translational regulator that binds mRNA to regulate translation initiation and/or mRNA stability. Mediates global changes in gene expression, shifting from rapid growth to stress survival by linking envelope stress, the stringent response and the catabolite repression systems. Usually binds in the 5'-UTR; binding at or near the Shine-Dalgarno sequence prevents ribosome-binding, repressing translation, binding elsewhere in the 5'-UTR can activate translation and/or stabilize the mRNA. Its function is antagonized by small RNA(s). The sequence is that of Translational regulator CsrA from Haemophilus influenzae (strain PittEE).